The primary structure comprises 924 residues: MNRRDFIKNTAIASACGVAGLSVPSSVLANTENKWRWDKAVCRFCGTGCGILVARQDGKIVAVKGDPAAPVNRGLNCIKGYFNAKIMYGEDRLVTPLLRVNAKGEFDKNGKFQQVSWQRAFDEMEKHFKKAYKEKGVEGIGIFASGQYTIQEGYAAAKLVKAGFRSNNIDPNARHCMASAVVGFMQTFGVDEPSGCYDDIELTDTIITWGANMAEMHPILWSRVSDRKLSNLDKVKIVNLSTFSNRTSHIADTEIIFKPNTDLAIWNYIAREIVYNHPEAMDKEFVEKHCIFTTGYADIGYGMRNNPNHPKFKASEKDTVAKQNSIILDDEEAVSLAYLGVKAGDKFEMKHQSAPDAHWEISFEDFKKALEPYTLDYVAKVAKGNEDESIEEFKKKLQELANLYIEKNRKVVSFWTMGFNQHTRGSWVNEQAYMVHFLLGKQAKPGSGAFSLTGQPSACGTAREVGTFSHRLPADMVVANPKHREISEKIWKVPAKTINPKPGAPYLKIMRDLEDGNIKFAWVQVNNPWQNTANANHWIAAAREMDNFIVVSDCYPGISAKVADLILPSAMIYEKWGAYGNAERRTQHWKQQVLPVGEAMSDTWQILEFAKRFKLKEVWGETKVDDKLTLPSILEEAKAMGYNEDDTLYDVLFANKEAKSFKANDPIAKGFDNSDVNGDERKIIGSDGKEFDGYGFFVQKYLWEEYRKFGLGHGHDLADFDTYHKVRGLRWPVVNGKETQWRFNTKFDYYAKKAAPNSDFAFYGAFAKELPKGDLIAPQTQEKYSLKNKAKIFFRPFMKAPERPSEEYPFWLCTGRVLEHWHSGTMTMRVPELFRAVPEALCYMNEDDAKKMQIAQGDIVWVESRRGKVKARVDFRGRNKPSKGLVYVPWFDENVYINKVTLDATCPLSNQTDFKKCAVKITKA.

Residues 1–29 (MNRRDFIKNTAIASACGVAGLSVPSSVLA) constitute a signal peptide (tat-type signal). In terms of domain architecture, 4Fe-4S Mo/W bis-MGD-type spans 35-91 (WRWDKAVCRFCGTGCGILVARQDGKIVAVKGDPAAPVNRGLNCIKGYFNAKIMYGED). Residues Cys-42, Cys-45, Cys-49, and Cys-77 each coordinate [4Fe-4S] cluster. Residues Lys-79, Gln-147, Asn-172, Cys-176, 209 to 216 (WGANMAEM), Met-417, Gln-421, Asn-527, 552 to 553 (SD), Lys-575, Asp-602, and 814 to 823 (TGRVLEHWHS) contribute to the Mo-bis(molybdopterin guanine dinucleotide) site. Trp-890 contributes to the substrate binding site. Residues Asn-898 and Lys-915 each coordinate Mo-bis(molybdopterin guanine dinucleotide).

The protein belongs to the prokaryotic molybdopterin-containing oxidoreductase family. NasA/NapA/NarB subfamily. In terms of assembly, component of the periplasmic nitrate reductase NapAB complex composed of NapA and NapB. [4Fe-4S] cluster is required as a cofactor. It depends on Mo-bis(molybdopterin guanine dinucleotide) as a cofactor. Predicted to be exported by the Tat system. The position of the signal peptide cleavage has not been experimentally proven.

It is found in the periplasm. It carries out the reaction 2 Fe(II)-[cytochrome] + nitrate + 2 H(+) = 2 Fe(III)-[cytochrome] + nitrite + H2O. In terms of biological role, catalytic subunit of the periplasmic nitrate reductase complex NapAB. Receives electrons from NapB and catalyzes the reduction of nitrate to nitrite. This is Periplasmic nitrate reductase from Campylobacter lari (strain RM2100 / D67 / ATCC BAA-1060).